Here is a 264-residue protein sequence, read N- to C-terminus: Cell division protein FtsQ (264 aa).

A disordered region spans residues 1-24; the sequence is MAGPTTAERGARQQESSGPPRVRR. Topologically, residues 1–32 are cytoplasmic; the sequence is MAGPTTAERGARQQESSGPPRVRRFRPPRLRT. Residues 33-53 form a helical membrane-spanning segment; it reads IIILAVALVLVAGGTVWVLYG. The Extracellular portion of the chain corresponds to 54–264; the sequence is SNWTRLERVS…VATAPASSGS (211 aa). The region spanning 57 to 126 is the POTRA domain; it reads TRLERVSVSG…HGIGLKVTER (70 aa).

Belongs to the FtsQ/DivIB family. FtsQ subfamily.

It is found in the cell membrane. Essential cell division protein. The polypeptide is Cell division protein FtsQ (Streptomyces coelicolor (strain ATCC BAA-471 / A3(2) / M145)).